Consider the following 99-residue polypeptide: Malonate decarboxylase acyl carrier protein (99 aa).

S25 carries the post-translational modification O-(phosphoribosyl dephospho-coenzyme A)serine.

It belongs to the MdcC family. Covalently binds the prosthetic group of malonate decarboxylase.

The protein resides in the cytoplasm. In terms of biological role, subunit of malonate decarboxylase, it is an acyl carrier protein to which acetyl and malonyl thioester residues are bound via a 2'-(5''-phosphoribosyl)-3'-dephospho-CoA prosthetic group and turn over during the catalytic mechanism. The sequence is that of Malonate decarboxylase acyl carrier protein from Pseudomonas putida (Arthrobacter siderocapsulatus).